A 134-amino-acid chain; its full sequence is Interleukin-5 (134 aa).

The first 21 residues, 1–21, serve as a signal peptide directing secretion; it reads MRMHLHLTLVALGAAYVCANA. 2 N-linked (GlcNAc...) asparagine glycosylation sites follow: asparagine 76 and asparagine 90.

The protein belongs to the IL-5 family. Homodimer; disulfide-linked. Interacts with IL5RA. Interacts with CSF2RB.

Its subcellular location is the secreted. Homodimeric cytokine expressed predominantly by T-lymphocytes and NK cells that plays an important role in the survival, differentiation, and chemotaxis of eosinophils. Also acts on activated and resting B-cells to induce immunoglobulin production, growth, and differentiation. Mechanistically, exerts its biological effects through a receptor composed of IL5RA subunit and the cytokine receptor common subunit beta/CSF2RB. Binding to the receptor leads to activation of various kinases including LYN, SYK and JAK2 and thereby propagates signals through the RAS-MAPK and JAK-STAT5 pathways respectively. In Bos taurus (Bovine), this protein is Interleukin-5 (IL5).